The sequence spans 448 residues: Phosphoglucosamine mutase (448 aa).

The active-site Phosphoserine intermediate is Ser-100. Residues Ser-100, Asp-240, Asp-242, and Asp-244 each coordinate Mg(2+). A Phosphoserine modification is found at Ser-100.

The protein belongs to the phosphohexose mutase family. The cofactor is Mg(2+). Activated by phosphorylation.

The enzyme catalyses alpha-D-glucosamine 1-phosphate = D-glucosamine 6-phosphate. Functionally, catalyzes the conversion of glucosamine-6-phosphate to glucosamine-1-phosphate. This chain is Phosphoglucosamine mutase, found in Clostridium beijerinckii (strain ATCC 51743 / NCIMB 8052) (Clostridium acetobutylicum).